The primary structure comprises 330 residues: MTPNSTGEVPGPIPRGALELSLALASLIIAANLLLALGIACDRRLRSPPAGCFFLSLLLAGLLTGLALPTLPGLWRQSHRGYWSCLLVYLAPNFSFLSLLANLLLVHGERYVAVLRPLQPPGSIRLALLLTWTGPLLFASLPALGWNHWGPEANCSSQTIFPAPYLYLEVYGLLLPAVGAAALLSAHVLLAAHRQLQDIRRLERAVCRDAPSALARALTWRQARAQAGATLLFGLCWGPYVATLFLSVLAYEQRPPLGPGTLLSLLSLGSASAAAVPVAMGLGDHRYTAPWRAAARRWLRGLRGRGSQASPGPSTAYHTSSQSSVDVDLN.

The Extracellular portion of the chain corresponds to 1-19; the sequence is MTPNSTGEVPGPIPRGALE. Residue N4 is glycosylated (N-linked (GlcNAc...) asparagine). Residues 20–40 traverse the membrane as a helical segment; it reads LSLALASLIIAANLLLALGIA. Over 41–50 the chain is Cytoplasmic; sequence CDRRLRSPPA. Residues 51 to 71 traverse the membrane as a helical segment; sequence GCFFLSLLLAGLLTGLALPTL. Over 72–85 the chain is Extracellular; that stretch reads PGLWRQSHRGYWSC. An intrachain disulfide couples C85 to C155. A helical membrane pass occupies residues 86–106; sequence LLVYLAPNFSFLSLLANLLLV. The Cytoplasmic portion of the chain corresponds to 107–125; sequence HGERYVAVLRPLQPPGSIR. A helical transmembrane segment spans residues 126 to 146; that stretch reads LALLLTWTGPLLFASLPALGW. The Extracellular segment spans residues 147 to 169; sequence NHWGPEANCSSQTIFPAPYLYLE. A glycan (N-linked (GlcNAc...) asparagine) is linked at N154. The chain crosses the membrane as a helical span at residues 170-190; that stretch reads VYGLLLPAVGAAALLSAHVLL. At 191-230 the chain is on the cytoplasmic side; that stretch reads AAHRQLQDIRRLERAVCRDAPSALARALTWRQARAQAGAT. Residues 231–251 traverse the membrane as a helical segment; it reads LLFGLCWGPYVATLFLSVLAY. At 252–261 the chain is on the extracellular side; sequence EQRPPLGPGT. Residues 262-282 traverse the membrane as a helical segment; it reads LLSLLSLGSASAAAVPVAMGL. The Cytoplasmic segment spans residues 283–330; it reads GDHRYTAPWRAAARRWLRGLRGRGSQASPGPSTAYHTSSQSSVDVDLN. The segment at 304–330 is disordered; that stretch reads GRGSQASPGPSTAYHTSSQSSVDVDLN. The span at 307–330 shows a compositional bias: polar residues; it reads SQASPGPSTAYHTSSQSSVDVDLN.

It belongs to the G-protein coupled receptor 1 family. In terms of tissue distribution, expressed at high level in spleen. Expressed at lower level in thymus, heart, lung, liver, kidney, ileum, blood and adherent alveolar macrophage cells.

It is found in the cell membrane. Functionally, receptor for bile acid. Bile-acid binding induces its internalization, activation of extracellular signal-regulated kinase and intracellular cAMP production. May be involved in the suppression of macrophage functions by bile acids. Involved in bile acid promoted GLP1R secretion. This Oryctolagus cuniculus (Rabbit) protein is G-protein coupled bile acid receptor 1 (GPBAR1).